A 297-amino-acid polypeptide reads, in one-letter code: HTH-type transcriptional regulator ArgP (297 aa).

The HTH lysR-type domain occupies 4–60 (PDYRTLQALDAVIRERGFERAAQKLCITQSAVSQRIKQLENMFGQPLLVRTVPPRPT). The H-T-H motif DNA-binding region spans 21–40 (FERAAQKLCITQSAVSQRIK).

It belongs to the LysR transcriptional regulatory family. As to quaternary structure, homodimer.

Controls the transcription of genes involved in arginine and lysine metabolism. The sequence is that of HTH-type transcriptional regulator ArgP from Salmonella dublin (strain CT_02021853).